The sequence spans 119 residues: Large ribosomal subunit protein bL20c (119 aa).

The protein belongs to the bacterial ribosomal protein bL20 family.

It is found in the plastid. The protein resides in the chloroplast. Functionally, binds directly to 23S ribosomal RNA and is necessary for the in vitro assembly process of the 50S ribosomal subunit. It is not involved in the protein synthesizing functions of that subunit. This Brachypodium distachyon (Purple false brome) protein is Large ribosomal subunit protein bL20c.